The primary structure comprises 110 residues: U-scoloptoxin(16)-Er7a (110 aa).

The first 26 residues, 1 to 26 (MTSTRKLSVSCLIVFMVSSLIAVSSG), serve as a signal peptide directing secretion.

Belongs to the scoloptoxin-16 family. Post-translationally, contains 4 disulfide bonds. Expressed by the venom gland.

The protein resides in the secreted. The protein is U-scoloptoxin(16)-Er7a of Ethmostigmus rubripes (Giant centipede).